Consider the following 403-residue polypeptide: Non-structural maintenance of chromosomes element 4 homolog A (403 aa).

Basic and acidic residues predominate over residues 1-45 (MRKTVKRESEATGGKREADDEPEKLRSVKKEKQRKTEADSVRPDE). 3 disordered regions span residues 1 to 57 (MRKT…QGIS), 194 to 226 (LKQRKRAPNRKRTKPGEGVRPDEVDDSQSEEKT), and 342 to 403 (SSCP…LTSS). A compositionally biased stretch (basic residues) spans 196–206 (QRKRAPNRKRT). Low complexity predominate over residues 342–353 (SSCPAASAPASA). A compositionally biased stretch (polar residues) spans 354–363 (DFTQDTQTTP). Over residues 384-393 (TPDKEGDGTR) the composition is skewed to basic and acidic residues. Basic residues predominate over residues 394–403 (RRCKRRLTSS).

This sequence belongs to the NSE4 family. Interacts with SMC5, SMC6A or SMC6B. The SMC5-SMC6 complex is composed of the SMC5 and SMC6 heterodimer attached via their hinge domain and from the non-SMC subunit NSE4A or NSE4B. As to expression, expressed in seedlings, rosette leaves and floral buds.

It is found in the nucleus. Component of the SMC5-SMC6 complex, that promotes sister chromatid alignment after DNA damage and facilitates double-stranded DNA breaks (DSBs) repair via homologous recombination between sister chromatids. This chain is Non-structural maintenance of chromosomes element 4 homolog A (NSE4A), found in Arabidopsis thaliana (Mouse-ear cress).